The primary structure comprises 196 residues: Holliday junction branch migration complex subunit RuvA (196 aa).

Residues 1–62 (MYEYINGLIT…ENDISLYGFI (62 aa)) are domain I. Positions 63-141 (DADEKALFNK…ELASKTGMVD (79 aa)) are domain II. The interval 142-148 (SSSNPEQ) is flexible linker. The domain III stretch occupies residues 148-196 (QSQALDDALEALLALGYTAKDVKAVAQIIGRNSDTTDGYIRSALKLLVK).

The protein belongs to the RuvA family. Homotetramer. Forms an RuvA(8)-RuvB(12)-Holliday junction (HJ) complex. HJ DNA is sandwiched between 2 RuvA tetramers; dsDNA enters through RuvA and exits via RuvB. An RuvB hexamer assembles on each DNA strand where it exits the tetramer. Each RuvB hexamer is contacted by two RuvA subunits (via domain III) on 2 adjacent RuvB subunits; this complex drives branch migration. In the full resolvosome a probable DNA-RuvA(4)-RuvB(12)-RuvC(2) complex forms which resolves the HJ.

The protein resides in the cytoplasm. The RuvA-RuvB-RuvC complex processes Holliday junction (HJ) DNA during genetic recombination and DNA repair, while the RuvA-RuvB complex plays an important role in the rescue of blocked DNA replication forks via replication fork reversal (RFR). RuvA specifically binds to HJ cruciform DNA, conferring on it an open structure. The RuvB hexamer acts as an ATP-dependent pump, pulling dsDNA into and through the RuvAB complex. HJ branch migration allows RuvC to scan DNA until it finds its consensus sequence, where it cleaves and resolves the cruciform DNA. In Leuconostoc mesenteroides subsp. mesenteroides (strain ATCC 8293 / DSM 20343 / BCRC 11652 / CCM 1803 / JCM 6124 / NCDO 523 / NBRC 100496 / NCIMB 8023 / NCTC 12954 / NRRL B-1118 / 37Y), this protein is Holliday junction branch migration complex subunit RuvA.